A 60-amino-acid polypeptide reads, in one-letter code: Cytotoxin 2a (60 aa).

Disulfide bonds link Cys3-Cys21, Cys14-Cys38, Cys42-Cys53, and Cys54-Cys59.

This sequence belongs to the three-finger toxin family. Short-chain subfamily. Type IA cytotoxin sub-subfamily. In terms of assembly, monomer in solution; Homodimer and oligomer in the presence of negatively charged lipids forming a pore with a size ranging between 20 and 30 Angstroms. Expressed by the venom gland.

It localises to the secreted. It is found in the target cell membrane. In terms of biological role, shows cytolytic activity on many different cells by forming pore in lipid membranes. In vivo, increases heart rate or kills the animal by cardiac arrest. In addition, it binds to heparin with high affinity, interacts with Kv channel-interacting protein 1 (KCNIP1) in a calcium-independent manner, and binds to integrin alpha-V/beta-3 (ITGAV/ITGB3) with moderate affinity. Preferentially binds acidic phospholipids like phosphatidylserine, phosphatidic acid and phosphatidyl glycerol. Has hemolytic activity towards human erythrocytes (EC(50)=1.024 uM) and cytolytic activity towards various cell lines. The sequence is that of Cytotoxin 2a from Naja naja (Indian cobra).